A 1123-amino-acid chain; its full sequence is Leucine-rich repeat receptor-like protein kinase PEPR1 (1123 aa).

Residues Met-1–Cys-28 form the signal peptide. Residues Leu-29–Gln-769 lie on the Extracellular side of the membrane. One copy of the LRR 1 repeat lies at Ser-31–Thr-53. Asn-57, Asn-81, Asn-110, and Asn-121 each carry an N-linked (GlcNAc...) asparagine glycan. LRR repeat units lie at residues Ser-74–Leu-98, Lys-99–Cys-122, Lys-124–Ser-145, Leu-146–Ile-170, Pro-171–Ala-194, Glu-196–Ser-218, and Ser-219–Gly-243. Asn-182 and Asn-217 each carry an N-linked (GlcNAc...) asparagine glycan. N-linked (GlcNAc...) asparagine glycans are attached at residues Asn-244, Asn-252, Asn-289, Asn-302, Asn-316, Asn-321, and Asn-337. 20 LRR repeats span residues Leu-245–Cys-266, Lys-267–Cys-290, Ser-292–Leu-314, Lys-315–Cys-338, Ser-340–Leu-362, Arg-363–Ser-386, Ser-388–Met-410, Lys-412–Asn-434, Ser-435–Gly-458, Arg-459–Cys-482, Thr-484–Asp-505, His-506–Cys-529, Lys-530–Leu-553, Gln-554–Cys-577, Ser-579–Asn-600, Trp-601–Leu-625, Lys-626–Glu-650, Leu-652–Leu-674, Ile-675–Gly-696, and Leu-697–Gln-721. 3 N-linked (GlcNAc...) asparagine glycosylation sites follow: Asn-398, Asn-420, and Asn-434. N-linked (GlcNAc...) asparagine glycosylation is present at Asn-494. N-linked (GlcNAc...) asparagine glycosylation is found at Asn-531, Asn-536, Asn-560, Asn-591, and Asn-597. N-linked (GlcNAc...) asparagine glycosylation is found at Asn-681 and Asn-686. Residue Asn-745 is glycosylated (N-linked (GlcNAc...) asparagine). The chain crosses the membrane as a helical span at residues Ile-770 to Phe-790. The Cytoplasmic segment spans residues Ile-791 to Arg-1123. A Phosphothreonine modification is found at Thr-824. The region spanning Leu-827–Arg-1115 is the Protein kinase domain. ATP contacts are provided by residues Ile-833–Val-841 and Lys-855. Phosphotyrosine is present on residues Tyr-901 and Tyr-941. Residue Asp-954 is the Proton acceptor of the active site. At Tyr-995 the chain carries Phosphotyrosine.

Belongs to the protein kinase superfamily. Ser/Thr protein kinase family. In terms of assembly, interacts with PEP1 and BAK1. Interacts with BIK1 and PBL1. In terms of processing, N-glycosylated.

Its subcellular location is the cell membrane. The catalysed reaction is L-seryl-[protein] + ATP = O-phospho-L-seryl-[protein] + ADP + H(+). It carries out the reaction L-threonyl-[protein] + ATP = O-phospho-L-threonyl-[protein] + ADP + H(+). Its function is as follows. Acts as a receptor for PEP defense peptides. Unlike typical immune receptors, senses an endogenous elicitor that potentiates pathogen-associated molecular pattern (PAMP)-inducible plant responses. Involved in PAMP-triggered immunity (PTI) signaling. Interacts with and phosphorylates the kinase BIK1, a central rate-limiting kinase in PTI signaling. The sequence is that of Leucine-rich repeat receptor-like protein kinase PEPR1 (PEPR1) from Arabidopsis thaliana (Mouse-ear cress).